The following is a 131-amino-acid chain: Glycine cleavage system H protein (131 aa).

In terms of domain architecture, Lipoyl-binding spans 24–106 (RVTVGISDHA…YGEGWMFVVE (83 aa)). Position 65 is an N6-lipoyllysine (K65).

The protein belongs to the GcvH family. The glycine cleavage system is composed of four proteins: P, T, L and H. Requires (R)-lipoate as cofactor.

In terms of biological role, the glycine cleavage system catalyzes the degradation of glycine. The H protein shuttles the methylamine group of glycine from the P protein to the T protein. This chain is Glycine cleavage system H protein, found in Stenotrophomonas maltophilia (strain K279a).